Consider the following 406-residue polypeptide: MVLSQRQREELNKAIADYLRSNGYESALEAFQKEAEMPGEIEKKYTGLLEKKWTSVIRLQKKVMDLEAKLAEAEKEFQSGGPNKKERSPSEWIPRPPARYSLSGHRSPITRVLFHPVYSVMVSASEDATIKIWDYETGDFERTLKGHTDAVQDVSFDQQGKLLASCSADMTIKLWDFQTFENIKTMHGHDHNVSSVHFMPNGDFLISASRDKTIKMWELATGYCVKTFTGHREWVRTVRVNQDGSLLASCSNDQTVRVWVVANKECKAELREHEHVVECIAWAPESCNGHVSEVMGAEKKGRSGPFLLSGSRDKTIKMWDISTGVCIMTLVGHDNWVRGVVWHPGGKYIISASDDKTIRVWDYKNKRCQKTLEAHQHFCTSIDFHRSAPYVITGSVDQTVKVWECR.

Residues 7–39 (QREELNKAIADYLRSNGYESALEAFQKEAEMPG) form the LisH domain. The stretch at 54 to 81 (TSVIRLQKKVMDLEAKLAEAEKEFQSGG) forms a coiled coil. Over residues 74–89 (EKEFQSGGPNKKERSP) the composition is skewed to basic and acidic residues. The segment at 74–99 (EKEFQSGGPNKKERSPSEWIPRPPAR) is disordered. 7 WD repeats span residues 104 to 145 (GHRS…RTLK), 146 to 185 (GHTDAVQDVSFDQQGKLLASCSADMTIKLWDFQTFENIKT), 188 to 227 (GHDHNVSSVHFMPNGDFLISASRDKTIKMWELATGYCVKT), 230 to 269 (GHREWVRTVRVNQDGSLLASCSNDQTVRVWVVANKECKAE), 272 to 329 (EHEH…CIMT), 332 to 371 (GHDNWVRGVVWHPGGKYIISASDDKTIRVWDYKNKRCQKT), and 374 to 406 (AHQHFCTSIDFHRSAPYVITGSVDQTVKVWECR).

Belongs to the WD repeat LIS1/nudF family.

Its subcellular location is the cytoplasm. It is found in the cytoskeleton. It localises to the microtubule organizing center. The protein localises to the centrosome. Positively regulates the activity of the minus-end directed microtubule motor protein dynein. May enhance dynein-mediated microtubule sliding by targeting dynein to the microtubule plus end. Required for several dynein- and microtubule-dependent processes. This chain is Lissencephaly-1 homolog, found in Branchiostoma floridae (Florida lancelet).